The following is a 254-amino-acid chain: Proteasome subunit alpha (254 aa).

Positions 231–254 (ESGAASADGEAETEAETDSGSDEE) are disordered. Over residues 239-254 (GEAETEAETDSGSDEE) the composition is skewed to acidic residues.

The protein belongs to the peptidase T1A family. The 20S proteasome core is composed of 14 alpha and 14 beta subunits that assemble into four stacked heptameric rings, resulting in a barrel-shaped structure. The two inner rings, each composed of seven catalytic beta subunits, are sandwiched by two outer rings, each composed of seven alpha subunits. The catalytic chamber with the active sites is on the inside of the barrel. Has probably a gated structure, the ends of the cylinder being occluded by the N-termini of the alpha-subunits. Is likely capped by the proteasome-associated ATPase, ARC. The N-terminus is blocked.

It is found in the cytoplasm. It participates in protein degradation; proteasomal Pup-dependent pathway. The formation of the proteasomal ATPase ARC-20S proteasome complex, likely via the docking of the C-termini of ARC into the intersubunit pockets in the alpha-rings, may trigger opening of the gate for substrate entry. Interconversion between the open-gate and close-gate conformations leads to a dynamic regulation of the 20S proteasome proteolysis activity. Peptidolytic activity is completely inhibited by lactacystin, and to a lesser extent, by N-acetyl-Leu-Leu-norleucinal (Ac-LLnL) and benzoyloxycarbonyl-Leu-Leu-Leu-vinylsulfone (Z-LLL-VS) in vitro. Functionally, component of the proteasome core, a large protease complex with broad specificity involved in protein degradation. The S.coelicolor proteasome is able to cleave oligopeptides after hydrophobic residues, but not after basic or acidic residues, thus displaying chymotrypsin-like activity but not trypsin-like activity. In Streptomyces coelicolor (strain ATCC BAA-471 / A3(2) / M145), this protein is Proteasome subunit alpha.